Consider the following 459-residue polypeptide: Argininosuccinate lyase (459 aa).

The disordered stretch occupies residues aspartate 440 to proline 459.

Belongs to the lyase 1 family. Argininosuccinate lyase subfamily.

The protein resides in the cytoplasm. The enzyme catalyses 2-(N(omega)-L-arginino)succinate = fumarate + L-arginine. It participates in amino-acid biosynthesis; L-arginine biosynthesis; L-arginine from L-ornithine and carbamoyl phosphate: step 3/3. The chain is Argininosuccinate lyase from Pyrococcus furiosus (strain ATCC 43587 / DSM 3638 / JCM 8422 / Vc1).